Here is a 122-residue protein sequence, read N- to C-terminus: Large ribosomal subunit protein uL14c (122 aa).

The protein belongs to the universal ribosomal protein uL14 family. Part of the 50S ribosomal subunit.

The protein localises to the plastid. Functionally, binds to 23S rRNA. This is Large ribosomal subunit protein uL14c from Cuscuta gronovii (Common dodder).